Consider the following 73-residue polypeptide: ATP synthase subunit 9, mitochondrial (73 aa).

2 consecutive transmembrane segments (helical) span residues 12 to 32 and 50 to 70; these read VAALGLIGAGIGVGIVFAALI and ILGFALSEATGLFALMVSFLL.

Belongs to the ATPase C chain family. In terms of assembly, F-type ATPases have 2 components, CF(1) - the catalytic core - and CF(0) - the membrane proton channel. CF(1) has five subunits: alpha(3), beta(3), gamma(1), delta(1), epsilon(1). CF(0) has three main subunits: a, b and c.

It is found in the mitochondrion inner membrane. Functionally, mitochondrial membrane ATP synthase (F(1)F(0) ATP synthase or Complex V) produces ATP from ADP in the presence of a proton gradient across the membrane which is generated by electron transport complexes of the respiratory chain. F-type ATPases consist of two structural domains, F(1) - containing the extramembraneous catalytic core and F(0) - containing the membrane proton channel, linked together by a central stalk and a peripheral stalk. During catalysis, ATP synthesis in the catalytic domain of F(1) is coupled via a rotary mechanism of the central stalk subunits to proton translocation. Part of the complex F(0) domain. A homomeric c-ring of probably 10 subunits is part of the complex rotary element. In Mycosarcoma maydis (Corn smut fungus), this protein is ATP synthase subunit 9, mitochondrial (ATP9).